The chain runs to 940 residues: Isoleucine--tRNA ligase (940 aa).

The 'HIGH' region signature appears at 58–68 (PYANGSIHIGH). Glutamate 564 lines the L-isoleucyl-5'-AMP pocket. Residues 605 to 609 (KMSKS) carry the 'KMSKS' region motif. An ATP-binding site is contributed by lysine 608. Residues cysteine 903, cysteine 906, cysteine 923, and cysteine 926 each coordinate Zn(2+).

Belongs to the class-I aminoacyl-tRNA synthetase family. IleS type 1 subfamily. Monomer. Zn(2+) is required as a cofactor.

It is found in the cytoplasm. It catalyses the reaction tRNA(Ile) + L-isoleucine + ATP = L-isoleucyl-tRNA(Ile) + AMP + diphosphate. Its function is as follows. Catalyzes the attachment of isoleucine to tRNA(Ile). As IleRS can inadvertently accommodate and process structurally similar amino acids such as valine, to avoid such errors it has two additional distinct tRNA(Ile)-dependent editing activities. One activity is designated as 'pretransfer' editing and involves the hydrolysis of activated Val-AMP. The other activity is designated 'posttransfer' editing and involves deacylation of mischarged Val-tRNA(Ile). The polypeptide is Isoleucine--tRNA ligase (Shewanella sp. (strain W3-18-1)).